Reading from the N-terminus, the 373-residue chain is NAD(P)H-quinone oxidoreductase subunit 1 (373 aa).

9 consecutive transmembrane segments (helical) span residues 29-49 (LWVP…VMVM), 64-84 (IGPN…GIKL), 98-118 (VLFT…YLVV), 129-149 (IAIG…GLLM), 177-197 (LALS…VGIV), 202-222 (GLGI…IFLI), 267-287 (LLAS…VVPV), 309-329 (VLGI…AILL), and 348-368 (FLLP…LAFP).

Belongs to the complex I subunit 1 family. As to quaternary structure, NDH-1 is composed of at least 11 different subunits.

Its subcellular location is the cellular thylakoid membrane. The catalysed reaction is a plastoquinone + NADH + (n+1) H(+)(in) = a plastoquinol + NAD(+) + n H(+)(out). It catalyses the reaction a plastoquinone + NADPH + (n+1) H(+)(in) = a plastoquinol + NADP(+) + n H(+)(out). In terms of biological role, NDH-1 shuttles electrons from an unknown electron donor, via FMN and iron-sulfur (Fe-S) centers, to quinones in the respiratory and/or the photosynthetic chain. The immediate electron acceptor for the enzyme in this species is believed to be plastoquinone. Couples the redox reaction to proton translocation, and thus conserves the redox energy in a proton gradient. This is NAD(P)H-quinone oxidoreductase subunit 1 from Synechococcus sp. (strain JA-3-3Ab) (Cyanobacteria bacterium Yellowstone A-Prime).